The primary structure comprises 614 residues: Dihydroxy-acid dehydratase (614 aa).

Asp81 provides a ligand contact to Mg(2+). Residue Cys122 participates in [2Fe-2S] cluster binding. Mg(2+)-binding residues include Asp123 and Lys124. Lys124 bears the N6-carboxylysine mark. Residue Cys195 participates in [2Fe-2S] cluster binding. Position 491 (Glu491) interacts with Mg(2+). Ser517 functions as the Proton acceptor in the catalytic mechanism.

Belongs to the IlvD/Edd family. In terms of assembly, homodimer. It depends on [2Fe-2S] cluster as a cofactor. The cofactor is Mg(2+).

It catalyses the reaction (2R)-2,3-dihydroxy-3-methylbutanoate = 3-methyl-2-oxobutanoate + H2O. The enzyme catalyses (2R,3R)-2,3-dihydroxy-3-methylpentanoate = (S)-3-methyl-2-oxopentanoate + H2O. The protein operates within amino-acid biosynthesis; L-isoleucine biosynthesis; L-isoleucine from 2-oxobutanoate: step 3/4. It functions in the pathway amino-acid biosynthesis; L-valine biosynthesis; L-valine from pyruvate: step 3/4. Functionally, functions in the biosynthesis of branched-chain amino acids. Catalyzes the dehydration of (2R,3R)-2,3-dihydroxy-3-methylpentanoate (2,3-dihydroxy-3-methylvalerate) into 2-oxo-3-methylpentanoate (2-oxo-3-methylvalerate) and of (2R)-2,3-dihydroxy-3-methylbutanoate (2,3-dihydroxyisovalerate) into 2-oxo-3-methylbutanoate (2-oxoisovalerate), the penultimate precursor to L-isoleucine and L-valine, respectively. The sequence is that of Dihydroxy-acid dehydratase from Rhodopseudomonas palustris (strain BisA53).